The primary structure comprises 87 residues: UPF0250 protein KPN78578_06520 (87 aa).

It belongs to the UPF0250 family.

The polypeptide is UPF0250 protein KPN78578_06520 (Klebsiella pneumoniae subsp. pneumoniae (strain ATCC 700721 / MGH 78578)).